A 355-amino-acid polypeptide reads, in one-letter code: RGG repeats nuclear RNA binding protein A (355 aa).

A2 carries the N-acetylalanine modification. Positions 26–225 are disordered; sequence KIDKSKKSGQ…VEEKEPEDKE (200 aa). Residues 37 to 47 are compositionally biased toward low complexity; the sequence is SSLPAKSAPKL. Gly residues-rich tracts occupy residues 67-81 and 114-141; these read RGGG…GRGG and GGGA…SNEG. Residues 132-139 carry the Nuclear localization signal motif; sequence GRRGGFSN. The segment covering 143 to 168 has biased composition (basic and acidic residues); the sequence is DGERPRRAFERRSGTGRGSDFKRDGS. The short motif at 145 to 155 is the Arginine-rich RNA-binding motif E-R-P-R-R-X-[F/Y]-[E/D]-R-R-S element; sequence ERPRRAFERRS. Residues 177-190 show a composition bias toward low complexity; sequence GEEIAAETEAVAGV. Basic and acidic residues-rich tracts occupy residues 191–202 and 209–225; these read ETEKDVGEKPAV and ANKE…EDKE. Residues 234–289 form the FF domain; that stretch reads ILEEKKKALQSLTTSERKVDTKVFESMQQLSNKKSNDEIFIKLGSDKDKRKDDKEE. S268 bears the Phosphoserine mark. Residues 277–292 show a composition bias toward basic and acidic residues; sequence GSDKDKRKDDKEEKAK. Positions 277–355 are disordered; that stretch reads GSDKDKRKDD…AAQFPSLGGK (79 aa). Residues 323-333 are compositionally biased toward gly residues; the sequence is GRGGVSSGESG. Position 351 is a phosphoserine (S351).

Belongs to the SERBP1-HABP4 family. In terms of tissue distribution, expressed in seedlings, leaves, roots, inflorescences, and siliques. Constitutively expressed in seedlings and roots.

The protein localises to the cytoplasm. It is found in the perinuclear region. The protein resides in the nucleus. Its function is as follows. Ribosome-binding protein that acts as a regulator of mRNA translation by promoting ribosome inactivation. Binds RNA. Regulates responses to abscisic acid (ABA). Promotes stomata closure in drought conditions. Involved in resistance to salt and drought stresses via the accumulation of Pro. This Arabidopsis thaliana (Mouse-ear cress) protein is RGG repeats nuclear RNA binding protein A.